The following is a 116-amino-acid chain: MGTMHTSELLKHIYDINLSYLLLAQRLIVQDKASAMFRLGINEEMANTLGALTLPQMVKLAETNQLVCHFRFDDHQTITRLTQDSRVDDLQQIHTGIMLSTRLLNEADETARKKRA.

Belongs to the FlhD family. As to quaternary structure, homodimer; disulfide-linked. Forms a heterohexamer composed of two FlhC and four FlhD subunits. Each FlhC binds a FlhD dimer, forming a heterotrimer, and a hexamer assembles by dimerization of two heterotrimers.

The protein localises to the cytoplasm. Functions in complex with FlhC as a master transcriptional regulator that regulates transcription of several flagellar and non-flagellar operons by binding to their promoter region. Activates expression of class 2 flagellar genes, including fliA, which is a flagellum-specific sigma factor that turns on the class 3 genes. Also regulates genes whose products function in a variety of physiological pathways. This chain is Flagellar transcriptional regulator FlhD, found in Salmonella arizonae (strain ATCC BAA-731 / CDC346-86 / RSK2980).